Reading from the N-terminus, the 317-residue chain is Melanocyte-stimulating hormone receptor (317 aa).

Residues M1–E37 are Extracellular-facing. An N-linked (GlcNAc...) asparagine glycan is attached at N29. Residues V38 to I63 traverse the membrane as a helical segment. At A64 to P72 the chain is on the cytoplasmic side. A helical membrane pass occupies residues M73–L93. The Extracellular portion of the chain corresponds to E94–N118. A helical transmembrane segment spans residues V119 to V140. The Cytoplasmic portion of the chain corresponds to D141–R163. A helical membrane pass occupies residues A164–Y183. Topologically, residues D184 to C191 are extracellular. A helical membrane pass occupies residues L192–L211. The Cytoplasmic segment spans residues A212–A240. The helical transmembrane segment at A241 to L266 threads the bilayer. At C267 to N279 the chain is on the extracellular side. The helical transmembrane segment at F280–F300 threads the bilayer. Over R301–W317 the chain is Cytoplasmic. C315 carries the S-palmitoyl cysteine lipid modification.

It belongs to the G-protein coupled receptor 1 family. In terms of assembly, interacts with MGRN1, but does not undergo MGRN1-mediated ubiquitination; this interaction competes with GNAS-binding and thus inhibits agonist-induced cAMP production. Interacts with OPN3; the interaction results in a decrease in MC1R-mediated cAMP signaling and ultimately a decrease in melanin production in melanocytes.

The protein localises to the cell membrane. Functionally, receptor for MSH (alpha, beta and gamma) and ACTH. The activity of this receptor is mediated by G proteins which activate adenylate cyclase. Mediates melanogenesis, the production of eumelanin (black/brown) and phaeomelanin (red/yellow), via regulation of cAMP signaling in melanocytes. The polypeptide is Melanocyte-stimulating hormone receptor (MC1R) (Papio anubis (Olive baboon)).